A 342-amino-acid chain; its full sequence is P2Y purinoceptor 12 (342 aa).

Over 1-27 (MQAVDNLTSAPGNTSLCTRDYKITQVL) the chain is Extracellular. Residues Asn-6 and Asn-13 are each glycosylated (N-linked (GlcNAc...) asparagine). Disulfide bonds link Cys-17–Cys-270 and Cys-97–Cys-175. Residues 28–50 (FPLLYTVLFFVGLITNGLAMRIF) traverse the membrane as a helical segment. The Cytoplasmic segment spans residues 51–61 (FQIRSKSNFII). Phosphoserine occurs at positions 55 and 57. A helical transmembrane segment spans residues 62 to 82 (FLKNTVISDLLMILTFPFKIL). Residues 83-97 (SDAKLGTGPLRTFVC) lie on the Extracellular side of the membrane. Residues Arg-93, Cys-97, and Tyr-105 each contribute to the ADP site. Residues 98 to 118 (QVTSVIFYFTMYISISFLGLI) form a helical membrane-spanning segment. The Cytoplasmic segment spans residues 119-142 (TIDRYQKTTRPFKTSNPKNLLGAK). Residues 143-162 (ILSVVIWAFMFLLSLPNMIL) traverse the membrane as a helical segment. Residues 156–159 (SLPN), 175–179 (CSFLK), His-187, and Asn-191 contribute to the ADP site. Topologically, residues 163–185 (TNRQPRDKNVKKCSFLKSEFGLV) are extracellular. The chain crosses the membrane as a helical span at residues 186–207 (WHEIVNYICQVIFWINFLIVIV). At 208–233 (CYTLITKELYRSYVRTRGVGKVPRKK) the chain is on the cytoplasmic side. A helical transmembrane segment spans residues 234–259 (VNVKVFIIIAVFFICFVPFHFARIPY). ADP-binding positions include 256–259 (RIPY), Gln-263, and Lys-280. The Extracellular segment spans residues 260–278 (TLSQTRDVFDCTAENTLFY). Residues 279–298 (VKESTLWLTSLNACLDPFIY) form a helical membrane-spanning segment. Residues 299-342 (FFLCKSFRNSLISMLKCPNSATSLSQDNRKKEQDGGDPNEETPM) lie on the Cytoplasmic side of the membrane. The interval 319-342 (ATSLSQDNRKKEQDGGDPNEETPM) is disordered. Residues 333–342 (GGDPNEETPM) are compositionally biased toward acidic residues.

Belongs to the G-protein coupled receptor 1 family. In terms of tissue distribution, highly expressed in the platelets, lower levels in the brain. Lowest levels in the lung, appendix, pituitary and adrenal gland. Expressed in the spinal cord and in the fetal brain.

The protein localises to the cell membrane. Functionally, receptor for ADP and ATP coupled to G-proteins that inhibit the adenylyl cyclase second messenger system. Not activated by UDP and UTP. Required for normal platelet aggregation and blood coagulation. This Homo sapiens (Human) protein is P2Y purinoceptor 12 (P2RY12).